The primary structure comprises 318 residues: Ornithine carbamoyltransferase (318 aa).

Carbamoyl phosphate is bound by residues 63–66, Gln90, Arg114, and 141–144; these read STRT and HPCQ. Residues Asn172, Asp235, and 239 to 240 each bind L-ornithine; that span reads SM. Residues 275 to 276 and Arg303 contribute to the carbamoyl phosphate site; that span reads CL.

Belongs to the aspartate/ornithine carbamoyltransferase superfamily. OTCase family.

It is found in the cytoplasm. It carries out the reaction carbamoyl phosphate + L-ornithine = L-citrulline + phosphate + H(+). It functions in the pathway amino-acid biosynthesis; L-arginine biosynthesis; L-arginine from L-ornithine and carbamoyl phosphate: step 1/3. In terms of biological role, reversibly catalyzes the transfer of the carbamoyl group from carbamoyl phosphate (CP) to the N(epsilon) atom of ornithine (ORN) to produce L-citrulline. The polypeptide is Ornithine carbamoyltransferase (Prochlorococcus marinus (strain SARG / CCMP1375 / SS120)).